The sequence spans 979 residues: Mast/stem cell growth factor receptor Kit (979 aa).

The N-terminal stretch at 1 to 27 (MRGARGAWDFLCVLLLLLLLGVQTGSS) is a signal peptide. Topologically, residues 28–527 (QPSVSPGEPS…QIHPHTLFTP (500 aa)) are extracellular. Ig-like C2-type domains lie at 29–114 (PSVS…VFVR), 123–207 (DLPL…LKVR), 214–311 (PVVS…LEVV), 320–413 (PMMS…VYVN), and 416–510 (PEIL…FNFA). A disulfide bridge links Cys-60 with Cys-99. Asn-96, Asn-132, and Asn-147 each carry an N-linked (GlcNAc...) asparagine glycan. Disulfide bonds link Cys-138-Cys-188, Cys-153-Cys-185, and Cys-235-Cys-293. Asn-286, Asn-296, Asn-303, Asn-355, Asn-370, Asn-403, Asn-466, and Asn-489 each carry an N-linked (GlcNAc...) asparagine glycan. Cys-431 and Cys-494 are joined by a disulfide. Residues 528-548 (LLIGFVIAAGMMCIIVMILTY) traverse the membrane as a helical segment. Topologically, residues 549 to 979 (KYLQKPMYEV…TQPLLVHEDV (431 aa)) are cytoplasmic. Tyr-550, Tyr-556, Tyr-571, and Tyr-573 each carry phosphotyrosine; by autocatalysis. Tyr-571 is a Mg(2+) binding site. Residues 571–573 (YVY) form an important for interaction with phosphotyrosine-binding proteins region. Residues 592–940 (LSFGKTLGAG…ISDSTNHIYS (349 aa)) enclose the Protein kinase domain. ATP contacts are provided by residues 599 to 606 (GAGAFGKV), Lys-626, and 674 to 680 (EYCCYGD). Residues Tyr-706, Tyr-724, and Tyr-733 each carry the phosphotyrosine; by autocatalysis modification. Residues Ser-744 and Ser-749 each carry the phosphoserine; by PKC/PRKCA modification. Residue Asp-795 is the Proton acceptor of the active site. Residue Arg-799 participates in ATP binding. Mg(2+)-binding residues include Asn-800 and Asp-813. Residue Ser-824 is modified to Phosphoserine. Phosphotyrosine; by autocatalysis is present on Tyr-826. Ser-894 is subject to Phosphoserine. A phosphotyrosine; by autocatalysis mark is found at Tyr-903 and Tyr-939. Ser-962 bears the Phosphoserine mark.

It belongs to the protein kinase superfamily. Tyr protein kinase family. CSF-1/PDGF receptor subfamily. In terms of assembly, monomer in the absence of bound KITLG/SCF. Homodimer in the presence of bound KITLG/SCF, forming a heterotetramer with two KITLG/SCF molecules. Interacts (via phosphorylated tyrosine residues) with the adapter proteins GRB2 and GRB7 (via SH2 domain), and SH2B2/APS. Interacts (via C-terminus) with MPDZ (via the tenth PDZ domain). Interacts (via phosphorylated tyrosine residues) with PIK3R1 and PIK3 catalytic subunit. Interacts (via phosphorylated tyrosine) with CRK (isoform Crk-II), FYN, SHC1 and MATK/CHK (via SH2 domain). Interacts with LYN and FES/FPS. Interacts (via phosphorylated tyrosine residues) with the protein phosphatases PTPN6/SHP-1 (via SH2 domain), PTPN11/SHP-2 (via SH2 domain) and PTPRU. Interacts with PLCG1. Interacts with DOK1 and TEC. Interacts with IL1RAP (independent of stimulation with KITLG/SCF). A mast cell-specific KITLG/SCF-induced interleukin-33 signaling complex contains IL1RL1, IL1RAP, KIT and MYD88. In terms of processing, ubiquitinated by SOCS6. KIT is rapidly ubiquitinated after autophosphorylation induced by KITLG/SCF binding, leading to internalization and degradation. Post-translationally, autophosphorylated on tyrosine residues. KITLG/SCF binding promotes autophosphorylation. Phosphorylated tyrosine residues are important for interaction with specific binding partners.

The protein localises to the cell membrane. The enzyme catalyses L-tyrosyl-[protein] + ATP = O-phospho-L-tyrosyl-[protein] + ADP + H(+). Its activity is regulated as follows. Present in an inactive conformation in the absence of bound ligand. KITLG/SCF binding leads to dimerization and activation by autophosphorylation on tyrosine residues. Activity is down-regulated by PRKCA-mediated phosphorylation on serine residues. Functionally, tyrosine-protein kinase that acts as a cell-surface receptor for the cytokine KITLG/SCF and plays an essential role in the regulation of cell survival and proliferation, hematopoiesis, stem cell maintenance, gametogenesis, mast cell development, migration and function, and in melanogenesis. In response to KITLG/SCF binding, KIT can activate several signaling pathways. Phosphorylates PIK3R1, PLCG1, SH2B2/APS and CBL. Activates the AKT1 signaling pathway by phosphorylation of PIK3R1, the regulatory subunit of phosphatidylinositol 3-kinase. Activated KIT also transmits signals via GRB2 and activation of RAS, RAF1 and the MAP kinases MAPK1/ERK2 and/or MAPK3/ERK1. Promotes activation of STAT family members STAT1, STAT3, STAT5A and STAT5B. Activation of PLCG1 leads to the production of the cellular signaling molecules diacylglycerol and inositol 1,4,5-trisphosphate. KIT signaling is modulated by protein phosphatases, and by rapid internalization and degradation of the receptor. Activated KIT promotes phosphorylation of the protein phosphatases PTPN6/SHP-1 and PTPRU, and of the transcription factors STAT1, STAT3, STAT5A and STAT5B. Promotes phosphorylation of PIK3R1, CBL, CRK (isoform Crk-II), LYN, MAPK1/ERK2 and/or MAPK3/ERK1, PLCG1, SRC and SHC1. The chain is Mast/stem cell growth factor receptor Kit (KIT) from Canis lupus familiaris (Dog).